The chain runs to 342 residues: Ferredoxin--NADP reductase (342 aa).

8 residues coordinate FAD: Cys17, Asp36, Gln44, Tyr49, Val89, Phe124, Asp289, and Thr330.

This sequence belongs to the ferredoxin--NADP reductase type 2 family. As to quaternary structure, homodimer. FAD is required as a cofactor.

It catalyses the reaction 2 reduced [2Fe-2S]-[ferredoxin] + NADP(+) + H(+) = 2 oxidized [2Fe-2S]-[ferredoxin] + NADPH. The sequence is that of Ferredoxin--NADP reductase from Bradyrhizobium sp. (strain ORS 278).